Here is a 43-residue protein sequence, read N- to C-terminus: Potassium channel toxin gamma-KTx 4.8 (43 aa).

Disulfide bonds link Cys5/Cys23, Cys11/Cys34, Cys20/Cys39, and Cys24/Cys41.

The protein belongs to the ergtoxin family. Gamma-KTx 4 subfamily. In terms of tissue distribution, expressed by the venom gland.

The protein localises to the secreted. In terms of biological role, reversibly blocks Kv11/ERG potassium channels. The polypeptide is Potassium channel toxin gamma-KTx 4.8 (Centruroides elegans (Bark scorpion)).